The sequence spans 923 residues: MIESTTSHQDFQQRSMTGYALEHPSYRIRGALFRHQDDGRLLSGCGGDIEVIHALELERSQHTCLPVRVTNVVVFGSNDVVRLIQPIEGTEDVIVNGDYHVSIVQSVELFESSTVSKSRILKLPGKIIAVNAEKHSNTELLLVFLLETGIFHYSFCAHTSTHFQCIQAFRCNRPITSGLLWRDSGLLHVAYYDGFVRVGVVHEQYDDMLLVKRVAVNRNNLSVLLDVVFEEIGRIQKFEDTEKQRREDMLTTSKSLSDKLVAEEEVVEGDTTNDDFAKLKIEFKNQSIRCERVSQRLTSLRKLITIIKSALDMNDQIEQMISLLVDELSELEKLEQLCKEVERTGNQNLIGKSWIAVEEKQMVVEELIAKVNSDQIKKHSDVWEQKIDQIIDQLNGCSEAAKDMRLIISQNIFEHRGDKKDVFTHFVLDAQSRDITLYCLSGLTTMAIYPRKGKRVASISLDASFATCLTAACAMKSAEGVYVADQNNVFPTYFYRNRPKAGKGEKRYLDAGNQLQLPTFDSISSILVEPHQMILGSVTGGLLHLSFDFASNYEHFVVASSILAHPISSGSVNCIKLLATGESLLALHCTDTEIVVSEKDQERWHRVTHHTGGAHAIAVTPFSVDERGAFAVVASDTFVRLKVLQYAEESLIGLHDLGESRAEDENGHPIEVLNVSLDPSMQYRQLPCKLRYAVGFADKAIRTYVALLTGQHDFNVQEKFIAQIEPLFNVQNMICFHGRPMGCYVSCAKTLQIWNDLDRHQQKKLKSERMQLLKLSSSVTSMERAEGYLLLGFADDRLSIYEEKGNGAVDLVGTVDDWHKGLNDRIVMSLRTRASKTSCGTRLFIHSLTAHHIVIHTVLVTASKIEQHDFIVAHEHSMSQPIGFEFVSYKYFEFLVYGRGISNEKLSIEDRKRMDNFRDFEFN.

A coiled-coil region spans residues 312–347 (DMNDQIEQMISLLVDELSELEKLEQLCKEVERTGNQ).

Functionally, may have a role in tumor suppression. In Caenorhabditis elegans, this protein is Protein dct-6 (dct-6).